A 389-amino-acid polypeptide reads, in one-letter code: Ribosomal RNA large subunit methyltransferase M (389 aa).

Positions 1-13 are enriched in polar residues; that stretch reads MIGNARMSQKYPT. Residues 1–24 form a disordered region; it reads MIGNARMSQKYPTSSSRKRSPLSS. S-adenosyl-L-methionine-binding positions include serine 214, 247-250, aspartate 266, aspartate 286, and aspartate 302; that span reads APGG. The Proton acceptor role is filled by lysine 331.

The protein belongs to the class I-like SAM-binding methyltransferase superfamily. RNA methyltransferase RlmE family. RlmM subfamily. In terms of assembly, monomer.

Its subcellular location is the cytoplasm. It carries out the reaction cytidine(2498) in 23S rRNA + S-adenosyl-L-methionine = 2'-O-methylcytidine(2498) in 23S rRNA + S-adenosyl-L-homocysteine + H(+). Its function is as follows. Catalyzes the 2'-O-methylation at nucleotide C2498 in 23S rRNA. The sequence is that of Ribosomal RNA large subunit methyltransferase M from Hahella chejuensis (strain KCTC 2396).